Reading from the N-terminus, the 384-residue chain is 1-deoxy-D-xylulose 5-phosphate reductoisomerase (384 aa).

Positions 10, 11, 12, 13, 36, 38, and 122 each coordinate NADPH. Residue lysine 123 participates in 1-deoxy-D-xylulose 5-phosphate binding. Position 124 (glutamate 124) interacts with NADPH. Aspartate 148 contributes to the Mn(2+) binding site. Residues serine 149, glutamate 150, serine 174, and histidine 197 each coordinate 1-deoxy-D-xylulose 5-phosphate. A Mn(2+)-binding site is contributed by glutamate 150. Glycine 203 provides a ligand contact to NADPH. 1-deoxy-D-xylulose 5-phosphate-binding residues include serine 210, asparagine 215, lysine 216, and glutamate 219. Glutamate 219 is a binding site for Mn(2+).

Belongs to the DXR family. It depends on Mg(2+) as a cofactor. Mn(2+) is required as a cofactor.

It carries out the reaction 2-C-methyl-D-erythritol 4-phosphate + NADP(+) = 1-deoxy-D-xylulose 5-phosphate + NADPH + H(+). The protein operates within isoprenoid biosynthesis; isopentenyl diphosphate biosynthesis via DXP pathway; isopentenyl diphosphate from 1-deoxy-D-xylulose 5-phosphate: step 1/6. Catalyzes the NADPH-dependent rearrangement and reduction of 1-deoxy-D-xylulose-5-phosphate (DXP) to 2-C-methyl-D-erythritol 4-phosphate (MEP). This is 1-deoxy-D-xylulose 5-phosphate reductoisomerase from Geotalea daltonii (strain DSM 22248 / JCM 15807 / FRC-32) (Geobacter daltonii).